We begin with the raw amino-acid sequence, 180 residues long: MSRIGNRLLQIPNGVEVKIAENNLVTITGSKGTLSKQFSPLIKIEVEENKLITKRLNEQKHTKQLHGTTNSLLQGMLTGVSEGFKKELQITGVGYKAAVNGSKLNLSLGYSHPVEFEIPDGVVIQAVKPTELAITGIDKQLVGQVAANIRAYRKPEPYKGKGIKYKNETIIRKEGKAAGK.

This sequence belongs to the universal ribosomal protein uL6 family. Part of the 50S ribosomal subunit.

In terms of biological role, this protein binds to the 23S rRNA, and is important in its secondary structure. It is located near the subunit interface in the base of the L7/L12 stalk, and near the tRNA binding site of the peptidyltransferase center. This Mycoplasma capricolum subsp. capricolum (strain California kid / ATCC 27343 / NCTC 10154) protein is Large ribosomal subunit protein uL6.